Consider the following 657-residue polypeptide: Pyoverdine export ATP-binding/permease protein PvdT (657 aa).

In terms of domain architecture, ABC transporter spans 6 to 245 (IDLRGIRKSY…RSVNPAALQA (240 aa)). 43–50 (GASGSGKS) contributes to the ATP binding site. The next 4 helical transmembrane spans lie at 285–305 (ALTL…LAVG), 539–559 (IAAI…LMTV), 590–610 (LSVV…AALL), and 620–640 (LPAV…FGFM).

The protein belongs to the ABC transporter superfamily. Macrolide exporter (TC 3.A.1.122) family. In terms of assembly, part of the tripartite efflux system PvdRT-OpmQ, which is composed of an inner membrane component with both ATPase and permease domains, PvdT, a periplasmic membrane fusion protein, PvdR, and an outer membrane component, OpmQ.

It localises to the cell inner membrane. Part of the tripartite efflux system PvdRT-OpmQ required for the secretion into the extracellular milieu of the siderophore pyoverdine (PVD), which is involved in iron acquisition. This subunit binds PVD and drives its secretion by hydrolyzing ATP. The system is responsible for export of newly synthesized PVD after the final steps of biosynthesis have taken place in the periplasm. It is also responsible for recycling of PVD after internalization of ferri-PVD into the periplasm by the outer-membrane receptor FpvA and release of iron from PVD, thus making PVD available for new cycles of iron uptake. This chain is Pyoverdine export ATP-binding/permease protein PvdT, found in Pseudomonas syringae pv. syringae (strain B728a).